The following is a 499-amino-acid chain: Tetrathionate hydrolase (499 aa).

The N-terminal stretch at 1-32 (MPSIVRNHGPHNKILLSALLLALFGWVPLASA) is a signal peptide.

The protein belongs to the tetrathionate hydrolase family. Homodimer.

It localises to the cell membrane. It catalyses the reaction tetrathionate + H2O = sulfur + thiosulfate + sulfate + H(+). Its function is as follows. Catalyzes the hydrolysis of tetrathionate to generate elemental sulfur, thiosulfate and sulfate. The protein is Tetrathionate hydrolase of Acidithiobacillus ferrooxidans (strain ATCC 23270 / DSM 14882 / CIP 104768 / NCIMB 8455) (Ferrobacillus ferrooxidans (strain ATCC 23270)).